The following is a 218-amino-acid chain: Major NAD(P)H-flavin oxidoreductase (218 aa).

FMN is bound by residues 12 to 16 and N73; that span reads RYTSK. 154–159 contacts NAD(+); that stretch reads LARLNI. FMN-binding positions include 165 to 166 and 206 to 208; these read EG and KSR.

The protein belongs to the nitroreductase family. In terms of assembly, homodimer. FMN is required as a cofactor.

Involved in bioluminescence. It is a good supplier of reduced flavin mononucleotide (FMNH2) to the bioluminescence reaction. Major FMN reductase. It is capable of using both NADH and NADPH as electron donors. As electron acceptor, FMN is the most effective, FAD is considerably effective, and riboflavin is the least effective. This is Major NAD(P)H-flavin oxidoreductase from Aliivibrio fischeri (Vibrio fischeri).